The chain runs to 78 residues: Probable two-component-system connector protein YcgZ (78 aa).

Functionally, probably a connector protein for RcsB/C regulation of biofilm formation, providing additional signal input into the two-component signaling pathway. Partially antagonizes the activities of YmgA and AriR, proteins that, via the Rcs phosphorelay, promote the synthesis of colanic acid, an exopolysaccharide and matrix component. The polypeptide is Probable two-component-system connector protein YcgZ (ycgZ) (Escherichia coli (strain K12)).